A 433-amino-acid polypeptide reads, in one-letter code: Oxysterol-binding protein-like protein OBPa (433 aa).

The protein belongs to the OSBP family.

This Candida albicans (strain SC5314 / ATCC MYA-2876) (Yeast) protein is Oxysterol-binding protein-like protein OBPa (OBPA).